The primary structure comprises 70 residues: PPF2L antigen (70 aa).

The sequence is that of PPF2L antigen from Plasmodium falciparum (isolate Palo Alto / Uganda).